Consider the following 866-residue polypeptide: Protein translocase subunit SecA (866 aa).

ATP-binding positions include Q87, 105-109 (GEGKT), and D514. The tract at residues 819 to 858 (VSPIGTPSSEGGGETSGADTYSNKKIGRNDPCPCGSGKKY) is disordered. Residues C850, C852, C861, and C862 each contribute to the Zn(2+) site.

Belongs to the SecA family. In terms of assembly, monomer and homodimer. Part of the essential Sec protein translocation apparatus which comprises SecA, SecYEG and auxiliary proteins SecDF. Other proteins may also be involved. Zn(2+) is required as a cofactor.

The protein resides in the cell inner membrane. The protein localises to the cytoplasm. The catalysed reaction is ATP + H2O + cellular proteinSide 1 = ADP + phosphate + cellular proteinSide 2.. Part of the Sec protein translocase complex. Interacts with the SecYEG preprotein conducting channel. Has a central role in coupling the hydrolysis of ATP to the transfer of proteins into and across the cell membrane, serving as an ATP-driven molecular motor driving the stepwise translocation of polypeptide chains across the membrane. The protein is Protein translocase subunit SecA of Elusimicrobium minutum (strain Pei191).